The chain runs to 488 residues: E3 ubiquitin-protein ligase TRIM39 (488 aa).

The segment at 29–70 (CSVCLEYLKEPVIIECGHNFCKACITRWWEDLERDFPCPVCR) adopts an RING-type zinc-finger fold. The B box-type zinc finger occupies 102-143 (RDESLCSQHHEPLSLFCYEDQEAVCLICAISHTHRPHTVVPM). Zn(2+) is bound by residues Cys107, His110, Cys129, and His135. A coiled-coil region spans residues 181–250 (ELKRLVESRR…AHLAAEVEGK (70 aa)). Interaction with CDKN1A stretches follow at residues 268-307 (KCEK…QLIA) and 359-488 (TSGR…TDWE). The B30.2/SPRY domain occupies 289-484 (SNFPRQYFAL…NAAPLTIRPP (196 aa)).

It belongs to the TRIM/RBCC family. In terms of assembly, interacts with MOAP1. Interacts with CDKN1A. Post-translationally, autoubiquitinated.

The protein resides in the cytoplasm. It localises to the cytosol. Its subcellular location is the mitochondrion. The protein localises to the nucleus. It catalyses the reaction S-ubiquitinyl-[E2 ubiquitin-conjugating enzyme]-L-cysteine + [acceptor protein]-L-lysine = [E2 ubiquitin-conjugating enzyme]-L-cysteine + N(6)-ubiquitinyl-[acceptor protein]-L-lysine.. It functions in the pathway protein modification; protein ubiquitination. E3 ubiquitin-protein ligase. May facilitate apoptosis by inhibiting APC/C-Cdh1-mediated poly-ubiquitination and subsequent proteasome-mediated degradation of the pro-apoptotic protein MOAP1. Regulates the G1/S transition of the cell cycle and DNA damage-induced G2 arrest by stabilizing CDKN1A/p21. Positively regulates CDKN1A/p21 stability by competing with DTL for CDKN1A/p21 binding, therefore disrupting DCX(DTL) E3 ubiquitin ligase complex-mediated CDKN1A/p21 ubiquitination and degradation. The protein is E3 ubiquitin-protein ligase TRIM39 (Trim39) of Mus musculus (Mouse).